Consider the following 159-residue polypeptide: Large ribosomal subunit protein uL22c (159 aa).

Belongs to the universal ribosomal protein uL22 family. In terms of assembly, part of the 50S ribosomal subunit.

It localises to the plastid. It is found in the chloroplast. Its function is as follows. This protein binds specifically to 23S rRNA. In terms of biological role, the globular domain of the protein is located near the polypeptide exit tunnel on the outside of the subunit, while an extended beta-hairpin is found that lines the wall of the exit tunnel in the center of the 70S ribosome. The chain is Large ribosomal subunit protein uL22c (rpl22) from Ipomoea purpurea (Common morning glory).